A 307-amino-acid chain; its full sequence is UAP56-interacting factor (307 aa).

Over residues 1–25 (MSGFGAAALLSGSSAAAGTRSGSSD) the composition is skewed to low complexity. Disordered stretches follow at residues 1–28 (MSGF…DSLE) and 41–85 (NKKE…KNHL). The UAP56-binding motif motif lies at 26–44 (SLEKIDMSLDDIIKLNKKE). Residues 57 to 78 (LQQNRTQQFRTPGSKWGIQQQK) are compositionally biased toward polar residues.

Belongs to the UIF family. In terms of tissue distribution, widely expressed.

It is found in the nucleus. The protein resides in the nucleoplasm. The protein localises to the nucleus speckle. In terms of biological role, required for mRNA export from the nucleus to the cytoplasm. Acts as an adapter that uses the DDX39B/UAP56-NFX1 pathway to ensure efficient mRNA export and delivering to the nuclear pore. The polypeptide is UAP56-interacting factor (FYTTD1) (Gallus gallus (Chicken)).